The following is a 626-amino-acid chain: PEX5-related protein (626 aa).

3 disordered regions span residues 1–20 (MYQG…LSSD), 118–167 (VSQT…SSLD), and 181–235 (KFHG…ASEL). Residues 181–198 (KFHGDRNTKGHPMAERKS) are compositionally biased toward basic and acidic residues. Residue Ser205 is modified to Phosphoserine. The span at 225–235 (SALNSESASEL) shows a compositional bias: low complexity. Phosphoserine occurs at positions 253, 257, and 261. 3 TPR repeats span residues 326 to 359 (WPGA…DPGD), 360 to 393 (AEAW…QPNN), and 395 to 427 (KALM…NPKY). Ser445 and Ser447 each carry phosphoserine. 3 TPR repeats span residues 474-507 (PDLQ…RPED), 509-541 (SLWN…QPGF), and 543-575 (RSRY…QRKS).

It belongs to the peroxisomal targeting signal receptor family. As to quaternary structure, interacts with RAB8B. Forms an obligate 4:4 complex with HCN2. May interact with the C-terminal PTS1-type tripeptide peroxisomal targeting signal (SKL-type); the relevance of such interaction is however unclear. Interacts with HCN3. Interacts with HCN4 with a 4:4 HCN4:PEX5L stoichiometry; reduces the effects of cAMP on the voltage-dependence and rate of activation of HCN4. In terms of tissue distribution, mainly expressed in brain. Also expressed in pancreas, testis and pituitary.

The protein localises to the cytoplasm. It is found in the membrane. Functionally, accessory subunit of hyperpolarization-activated cyclic nucleotide-gated (HCN) channels, regulating their cell-surface expression and cyclic nucleotide dependence. This is PEX5-related protein (PEX5L) from Homo sapiens (Human).